Consider the following 319-residue polypeptide: Probable NAD(P)H-dependent D-xylose reductase xyl1 (319 aa).

The active-site Proton donor is Tyr-50. His-112 lines the substrate pocket. NAD(+) is bound by residues 166–167 (SN), 215–224 (SSFGPLSFLE), and 271–281 (KSNNPTRLSQN).

Belongs to the aldo/keto reductase family.

It catalyses the reaction xylitol + NAD(+) = D-xylose + NADH + H(+). The enzyme catalyses xylitol + NADP(+) = D-xylose + NADPH + H(+). Its pathway is carbohydrate metabolism; D-xylose degradation. Its function is as follows. Catalyzes the initial reaction in the xylose utilization pathway by reducing D-xylose into xylitol. Xylose is a major component of hemicelluloses such as xylan. Most fungi utilize D-xylose via three enzymatic reactions, xylose reductase (XR), xylitol dehydrogenase (XDH), and xylulokinase, to form xylulose 5-phosphate, which enters pentose phosphate pathway. This chain is Probable NAD(P)H-dependent D-xylose reductase xyl1 (xyl1), found in Aspergillus oryzae (strain ATCC 42149 / RIB 40) (Yellow koji mold).